Reading from the N-terminus, the 62-residue chain is Large ribosomal subunit protein bL33 (62 aa).

The protein belongs to the bacterial ribosomal protein bL33 family.

The protein is Large ribosomal subunit protein bL33 of Parabacteroides distasonis (strain ATCC 8503 / DSM 20701 / CIP 104284 / JCM 5825 / NCTC 11152).